The primary structure comprises 80 residues: Exodeoxyribonuclease 7 small subunit (80 aa).

It belongs to the XseB family. Heterooligomer composed of large and small subunits.

It localises to the cytoplasm. It carries out the reaction Exonucleolytic cleavage in either 5'- to 3'- or 3'- to 5'-direction to yield nucleoside 5'-phosphates.. Functionally, bidirectionally degrades single-stranded DNA into large acid-insoluble oligonucleotides, which are then degraded further into small acid-soluble oligonucleotides. The chain is Exodeoxyribonuclease 7 small subunit from Rickettsia bellii (strain OSU 85-389).